A 333-amino-acid polypeptide reads, in one-letter code: Holliday junction branch migration complex subunit RuvB (333 aa).

Residues 1-182 (MEERLVSGDV…FGVISRLEYY (182 aa)) form a large ATPase domain (RuvB-L) region. Residues Leu-21, Arg-22, Gly-63, Lys-66, Thr-67, Thr-68, 129-131 (EDY), Arg-172, Tyr-182, and Arg-219 contribute to the ATP site. Mg(2+) is bound at residue Thr-67. The tract at residues 183 to 253 (TTEHLTQIVM…LAKEALELLQ (71 aa)) is small ATPAse domain (RuvB-S). The head domain (RuvB-H) stretch occupies residues 256–333 (RLGLDHIDHK…EHFGMEVPKQ (78 aa)). Arg-311 and Arg-316 together coordinate DNA.

Belongs to the RuvB family. Homohexamer. Forms an RuvA(8)-RuvB(12)-Holliday junction (HJ) complex. HJ DNA is sandwiched between 2 RuvA tetramers; dsDNA enters through RuvA and exits via RuvB. An RuvB hexamer assembles on each DNA strand where it exits the tetramer. Each RuvB hexamer is contacted by two RuvA subunits (via domain III) on 2 adjacent RuvB subunits; this complex drives branch migration. In the full resolvosome a probable DNA-RuvA(4)-RuvB(12)-RuvC(2) complex forms which resolves the HJ.

It is found in the cytoplasm. It carries out the reaction ATP + H2O = ADP + phosphate + H(+). In terms of biological role, the RuvA-RuvB-RuvC complex processes Holliday junction (HJ) DNA during genetic recombination and DNA repair, while the RuvA-RuvB complex plays an important role in the rescue of blocked DNA replication forks via replication fork reversal (RFR). RuvA specifically binds to HJ cruciform DNA, conferring on it an open structure. The RuvB hexamer acts as an ATP-dependent pump, pulling dsDNA into and through the RuvAB complex. RuvB forms 2 homohexamers on either side of HJ DNA bound by 1 or 2 RuvA tetramers; 4 subunits per hexamer contact DNA at a time. Coordinated motions by a converter formed by DNA-disengaged RuvB subunits stimulates ATP hydrolysis and nucleotide exchange. Immobilization of the converter enables RuvB to convert the ATP-contained energy into a lever motion, pulling 2 nucleotides of DNA out of the RuvA tetramer per ATP hydrolyzed, thus driving DNA branch migration. The RuvB motors rotate together with the DNA substrate, which together with the progressing nucleotide cycle form the mechanistic basis for DNA recombination by continuous HJ branch migration. Branch migration allows RuvC to scan DNA until it finds its consensus sequence, where it cleaves and resolves cruciform DNA. This Geobacillus sp. (strain WCH70) protein is Holliday junction branch migration complex subunit RuvB.